Here is an 803-residue protein sequence, read N- to C-terminus: Zinc finger and BTB domain-containing protein 17 (803 aa).

One can recognise a BTB domain in the interval 1–104 (MDFPQHSQHV…VATFLQMQDI (104 aa)). The tract at residues 116–295 (EPATSPGGNA…GLRSGTYGDR (180 aa)) is disordered. Ser120 carries the post-translational modification Phosphoserine. The segment covering 132–142 (GGDKRAKEEKV) has biased composition (basic and acidic residues). Low complexity-rich tracts occupy residues 171 to 180 (GQAQSAASGA) and 206 to 217 (AAAEAEAALSES). Composition is skewed to acidic residues over residues 233–244 (EQKEQEEQEEEG) and 261–272 (EAPEENENEESA). Positions 269 to 308 (EESAGTDSGQELGSEARGLRSGTYGDRTESKAYGSVIHKC) are interaction with MYC. 13 consecutive C2H2-type zinc fingers follow at residues 306-328 (HKCEDCGKEFTHTGNFKRHIRIH), 334-356 (FSCRECSKAFSDPAACKAHEKTH), 362-384 (YGCEECGKSYRLISLLNLHKKRH), 390-412 (YRCEDCGKLFTTSGNLKRHQLVH), 418-440 (YQCDYCGRSFSDPTSKMRHLETH), 446-468 (HKCPHCDKKFNQVGNLKAHLKIH), 474-496 (LKCRECGKQFTTSGNLKRHLRIH), 502-524 (YVCIHCQRQFADPGALQRHVRIH), 530-552 (CQCVMCGKAFTQASSLIAHVRQH), 558-580 (YVCERCGKRFVQSSQLANHIRHH), 586-608 (HKCSVCSKAFVNVGDLSKHIIIH), 614-637 (YLCDKCGRGFNRVDNLRSHVKTVH), and 717-739 (YACDSCGDKFLDANSLAQHVRIH). Lys397 is covalently cross-linked (Glycyl lysine isopeptide (Lys-Gly) (interchain with G-Cter in ubiquitin)). A Glycyl lysine isopeptide (Lys-Gly) (interchain with G-Cter in ubiquitin) cross-link involves residue Lys481. Residues 637-718 (HQGKAGIKIL…EDPNTHILYA (82 aa)) are interaction with MYC. Positions 637 to 803 (HQGKAGIKIL…TAPECPPPAE (167 aa)) are interaction with HCFC1. Positions 779-803 (RDGAEGQPALAETSPTAPECPPPAE) are disordered.

This sequence belongs to the krueppel C2H2-type zinc-finger protein family. Homooligomerizes (via the BTB/POZ domain), multimerization is required for DNA binding. Interacts (via the C-terminal zinc fingers) with GIF1; the interaction results in the recruitment of MYB to the CDKN1A/p21 and CDKN1B promoters and repression of transcription. Interacts with TRAF2, interfering with the binding of UBC13 to TRAF2, and inhibiting TRAF2 E3 ligase activity. Interacts with MYC (via the C-terminal helix-loop-helix motif); the interaction inhibits ZBTB17 transactivation and growth arrest activities and renders it insoluble in the nucleus. Also interacts with HCFC1, MAGEA4 and TMPRSS11A. Interacts with BCL6; the interaction inhibits ZBTB17 transactivation activity on target genes involved in cell cycle arrest. Interacts with ZBTB49 isoform 3/ZNF509S1; this interaction blocks ZBTB17-mediated repression of RB1. Undergoes 'Lys-48'-linked polyubiquitination at Lys-397 and Lys-481 and subsequent proteasomal degradation in a TRAF2-dependent manner. As to expression, expressed in germinal center B-cells.

The protein resides in the nucleus. In terms of biological role, transcription factor that can function as an activator or repressor depending on its binding partners, and by targeting negative regulators of cell cycle progression. Plays a critical role in early lymphocyte development, where it is essential to prevent apoptosis in lymphoid precursors, allowing them to survive in response to IL7 and undergo proper lineage commitment. Has been shown to bind to the promoters of adenovirus major late protein and cyclin D1 and activate transcription. Required for early embryonic development during gastrulation. Represses RB1 transcription; this repression can be blocked by interaction with ZBTB49 isoform 3/ZNF509S1. The protein is Zinc finger and BTB domain-containing protein 17 (ZBTB17) of Homo sapiens (Human).